Reading from the N-terminus, the 884-residue chain is Receptor-like protein 39 (884 aa).

Residues 1 to 24 (MSELLFRLNFLLLLLLSCVSLASS) form the signal peptide. Residues 25 to 847 (FFSFNDPVVG…EEEEQVLNWK (823 aa)) are Extracellular-facing. Asn59, Asn71, and Asn92 each carry an N-linked (GlcNAc...) asparagine glycan. 10 LRR repeats span residues 98–122 (FHQL…EFGM), 124–146 (NKLE…SFSN), 147–170 (LSML…VRNL), 171–196 (RKLT…LFEL), 197–223 (HNLA…NLNK), 225–245 (ELLD…ISNL), 246–268 (TQLT…VQNL), 269–292 (TKLS…LFTM), 294–318 (FLSY…SLSS), and 320–344 (LENL…LINL). A glycan (N-linked (GlcNAc...) asparagine) is linked at Asn146. N-linked (GlcNAc...) asparagine glycans are attached at residues Asn190, Asn208, Asn244, and Asn267. 2 N-linked (GlcNAc...) asparagine glycosylation sites follow: Asn304 and Asn313. The stretch at 345-365 (KELHLSFLNTSYPINLKLFSS) is one LRR 11; degenerate repeat. Residue Asn353 is glycosylated (N-linked (GlcNAc...) asparagine). LRR repeat units follow at residues 366-391 (LKYL…SYIP), 392-413 (STLE…ILKT), 414-438 (LPNL…LWSL), 440-463 (RLSS…ILVN), and 464-487 (SSVR…PLSV). Asn403 carries N-linked (GlcNAc...) asparagine glycosylation. The N-linked (GlcNAc...) asparagine glycan is linked to Asn463. One copy of the LRR 17; degenerate repeat lies at 488 to 507 (NYFSARNNRYGGDIPLSICS). LRR repeat units lie at residues 508–529 (RRSL…PPCP), 530–553 (SNFL…YYAD), 554–577 (APLR…LLNC), 579–601 (ALQF…LKAL), 602–625 (PKLQ…NQGS), 628–652 (FPEL…FFEN), 702–725 (SSSA…IGLL), 726–749 (KALI…LANL), 750–773 (KKIE…IGTL), and 775–798 (FLAY…QITG). A glycan (N-linked (GlcNAc...) asparagine) is linked at Asn520. Asn576 is a glycosylation site (N-linked (GlcNAc...) asparagine). Asn732 is a glycosylation site (N-linked (GlcNAc...) asparagine). Asn780 carries N-linked (GlcNAc...) asparagine glycosylation. The helical transmembrane segment at 848 to 868 (GVGIGYGVGVLLGLAIAQLIA) threads the bilayer. Over 869-884 (SYKPEWLVFLFQSRNH) the chain is Cytoplasmic.

It belongs to the RLP family.

The protein localises to the cell membrane. In Arabidopsis thaliana (Mouse-ear cress), this protein is Receptor-like protein 39.